Reading from the N-terminus, the 486-residue chain is Cardiolipin synthase A (486 aa).

A run of 2 helical transmembrane segments spans residues 3 to 23 and 38 to 58; these read TFYT…IAGV and MAWL…YLSV. PLD phosphodiesterase domains follow at residues 219 to 246 and 399 to 426; these read MDLR…VDPR and EGGL…DMRS. Residues histidine 224, lysine 226, aspartate 231, histidine 404, lysine 406, and aspartate 411 contribute to the active site.

The protein belongs to the phospholipase D family. Cardiolipin synthase subfamily. ClsA sub-subfamily.

It is found in the cell inner membrane. The catalysed reaction is 2 a 1,2-diacyl-sn-glycero-3-phospho-(1'-sn-glycerol) = a cardiolipin + glycerol. Functionally, catalyzes the reversible phosphatidyl group transfer from one phosphatidylglycerol molecule to another to form cardiolipin (CL) (diphosphatidylglycerol) and glycerol. The protein is Cardiolipin synthase A of Cronobacter sakazakii (strain ATCC BAA-894) (Enterobacter sakazakii).